The chain runs to 207 residues: HTH-type transcriptional regulator BetI 2 (207 aa).

In terms of domain architecture, HTH tetR-type spans 8-68 (PIRRQQLIKA…ATMRQILTDL (61 aa)). The H-T-H motif DNA-binding region spans 31 to 50 (TVMRIARHAGVSAGIISHYF).

It functions in the pathway amine and polyamine biosynthesis; betaine biosynthesis via choline pathway [regulation]. Repressor involved in the biosynthesis of the osmoprotectant glycine betaine. It represses transcription of the choline transporter BetT and the genes of BetAB involved in the synthesis of glycine betaine. This is HTH-type transcriptional regulator BetI 2 from Chromohalobacter salexigens (strain ATCC BAA-138 / DSM 3043 / CIP 106854 / NCIMB 13768 / 1H11).